A 315-amino-acid chain; its full sequence is tRNA-dihydrouridine(16) synthase (315 aa).

FMN contacts are provided by residues 7-9 (PME) and glutamine 68. Cysteine 98 functions as the Proton donor in the catalytic mechanism. FMN-binding positions include lysine 139, 199 to 201 (NGE), and 223 to 224 (GR).

It belongs to the Dus family. DusC subfamily. The cofactor is FMN.

The catalysed reaction is 5,6-dihydrouridine(16) in tRNA + NADP(+) = uridine(16) in tRNA + NADPH + H(+). It carries out the reaction 5,6-dihydrouridine(16) in tRNA + NAD(+) = uridine(16) in tRNA + NADH + H(+). Catalyzes the synthesis of 5,6-dihydrouridine (D), a modified base found in the D-loop of most tRNAs, via the reduction of the C5-C6 double bond in target uridines. Specifically modifies U16 in tRNAs. This is tRNA-dihydrouridine(16) synthase from Shewanella oneidensis (strain ATCC 700550 / JCM 31522 / CIP 106686 / LMG 19005 / NCIMB 14063 / MR-1).